The sequence spans 239 residues: Putative zinc finger protein 132L (239 aa).

The segment at 20 to 40 (DASLSTKSPKREPSQEKEIKK) is disordered. Residues 28 to 40 (PKREPSQEKEIKK) are compositionally biased toward basic and acidic residues. 2 consecutive C3H1-type zinc fingers follow at residues 44–68 (IKKN…HPGE) and 81–106 (RRKT…HDES). The tract at residues 128-151 (PGECKFSHPPPPPPSPPSPPPKEE) is disordered. Over residues 135-147 (HPPPPPPSPPSPP) the composition is skewed to pro residues.

This chain is Putative zinc finger protein 132L, found in Acheta domesticus (House cricket).